A 523-amino-acid chain; its full sequence is UPF0329 protein ECU02_0050 (523 aa).

The interval 326 to 386 (EEKAKSKKRG…KTGKKSEGGR (61 aa)) is disordered. Over residues 330 to 339 (KSKKRGKRKS) the composition is skewed to basic residues. The segment covering 344–353 (EAKEEEKKES) has biased composition (basic and acidic residues). The segment covering 354-368 (ETEEVEAGEEVEMPS) has biased composition (acidic residues).

This sequence belongs to the UPF0329 family.

This Encephalitozoon cuniculi (strain GB-M1) (Microsporidian parasite) protein is UPF0329 protein ECU02_0050.